Here is a 742-residue protein sequence, read N- to C-terminus: ATP-dependent RNA helicase DBP7 (742 aa).

Residues 45 to 100 form a disordered region; that stretch reads GKTVSRKRKANTTGDEGIIPGRGENSIKKLHKESSYSSEEQEKYKGRNAHNTQGRT. Residues 143 to 172 carry the Q motif motif; it reads DQFASLGVSSLLVSHLEQKMRIKKPTSIQK. The Helicase ATP-binding domain maps to 178–372; sequence IIGNAGKNDF…NVALKDYKLI (195 aa). 191 to 198 is an ATP binding site; it reads AQTGSGKT. The DEGD box signature appears at 307 to 310; it reads DEGD. The 201-residue stretch at 405–605 folds into the Helicase C-terminal domain; sequence TLAATLNNIT…ILMPAFKDVN (201 aa). The interval 701–726 is disordered; that stretch reads AMGLQSSKDGNSEKKPTKENSKNKMF. Basic and acidic residues predominate over residues 710 to 722; that stretch reads GNSEKKPTKENSK.

The protein belongs to the DEAD box helicase family. DDX31/DBP7 subfamily.

The protein resides in the nucleus. It localises to the nucleolus. The enzyme catalyses ATP + H2O = ADP + phosphate + H(+). In terms of biological role, ATP-binding RNA helicase involved in the biogenesis of 60S ribosomal subunits and is required for the normal formation of 25S and 5.8S rRNAs. This chain is ATP-dependent RNA helicase DBP7 (DBP7), found in Saccharomyces cerevisiae (strain ATCC 204508 / S288c) (Baker's yeast).